Reading from the N-terminus, the 178-residue chain is Cytochrome c-type biogenesis protein CcmE (178 aa).

At 1–8 the chain is on the cytoplasmic side; sequence MNPRRKKR. Residues 9–29 form a helical; Signal-anchor for type II membrane protein membrane-spanning segment; it reads LAIVGSILIGIGVVSGLVLYA. Topologically, residues 30 to 178 are periplasmic; it reads LSQNIDLFFT…QLESKKTNSY (149 aa). Histidine 143 and tyrosine 147 together coordinate heme. Residues 154–178 are disordered; sequence EAAGQKHDKATYSDKQLESKKTNSY. The span at 157–178 shows a compositional bias: basic and acidic residues; the sequence is GQKHDKATYSDKQLESKKTNSY.

It belongs to the CcmE/CycJ family.

It is found in the cell inner membrane. Its function is as follows. Heme chaperone required for the biogenesis of c-type cytochromes. Transiently binds heme delivered by CcmC and transfers the heme to apo-cytochromes in a process facilitated by CcmF and CcmH. In Colwellia psychrerythraea (strain 34H / ATCC BAA-681) (Vibrio psychroerythus), this protein is Cytochrome c-type biogenesis protein CcmE.